The chain runs to 346 residues: D-amino-acid oxidase (346 aa).

FAD is bound by residues Gly-22, Ile-24, Thr-52, Thr-53, Ser-54, Ala-58, Ala-59, Leu-60, and Thr-187. D-proline is bound by residues Tyr-227 and Arg-284. Residues Tyr-227 and Arg-284 each coordinate D-serine. FAD-binding residues include Arg-284, Gly-311, Gly-312, Gly-314, and Thr-316. D-dopa is bound at residue Arg-284. Residue Gly-312 coordinates D-proline. D-serine is bound at residue Gly-312. Gly-312 provides a ligand contact to D-dopa. Residues 344 to 346 carry the Microbody targeting signal motif; that stretch reads SKL.

It belongs to the DAMOX/DASOX family. Requires FAD as cofactor.

It localises to the peroxisome matrix. It catalyses the reaction a D-alpha-amino acid + O2 + H2O = a 2-oxocarboxylate + H2O2 + NH4(+). The catalysed reaction is D-serine + O2 + H2O = 3-hydroxypyruvate + H2O2 + NH4(+). It carries out the reaction D-phenylalanine + O2 + H2O = 3-phenylpyruvate + H2O2 + NH4(+). The enzyme catalyses D-alanine + O2 + H2O = pyruvate + H2O2 + NH4(+). It catalyses the reaction D-arginine + O2 + H2O = 5-guanidino-2-oxopentanoate + H2O2 + NH4(+). The catalysed reaction is D-methionine + O2 + H2O = 4-methylsulfanyl-2-oxobutanoate + H2O2 + NH4(+). It carries out the reaction D-ornithine + O2 + H2O = 5-amino-2-oxopentanoate + H2O2 + NH4(+). The enzyme catalyses D-leucine + O2 + H2O = 4-methyl-2-oxopentanoate + H2O2 + NH4(+). It catalyses the reaction D-lysine + O2 + H2O = 6-amino-2-oxohexanoate + H2O2 + NH4(+). The catalysed reaction is D-proline + O2 = 1-pyrroline-2-carboxylate + H2O2. It carries out the reaction D-valine + O2 + H2O = 3-methyl-2-oxobutanoate + H2O2 + NH4(+). The enzyme catalyses D-histidine + O2 + H2O = 3-(imidazol-5-yl)pyruvate + H2O2 + NH4(+). Its function is as follows. Catalyzes the oxidative deamination of D-amino acids with broad substrate specificity. Has low in vitro and no in vivo activity on D-serine; primary D-serine degradation is performed by the D-serine dehydratase dsd. This is D-amino-acid oxidase (ddo-1) from Dictyostelium discoideum (Social amoeba).